The chain runs to 1082 residues: AP-3 complex subunit beta-2 (1082 aa).

Residues M1–G30 are disordered. S272 and S282 each carry phosphoserine. Residues N666–F677 show a composition bias toward basic and acidic residues. The segment at N666 to P801 is disordered. The segment covering A691–E700 has biased composition (acidic residues). Low complexity predominate over residues K704–S715. Composition is skewed to acidic residues over residues S716 to E726 and V775 to V784.

Belongs to the adaptor complexes large subunit family. In terms of assembly, adaptor protein complex 3 (AP-3) is a heterotetramer composed of two large adaptins (delta-type subunit AP3D1 and beta-type subunit AP3B1 or AP3B2), a medium adaptin (mu-type subunit AP3M1 or AP3M2) and a small adaptin (sigma-type subunit APS1 or AP3S2). AP-3 associates with the BLOC-1 complex.

The protein resides in the cytoplasmic vesicle. The protein localises to the clathrin-coated vesicle membrane. It localises to the golgi apparatus. In terms of biological role, subunit of non-clathrin- and clathrin-associated adaptor protein complex 3 (AP-3) that plays a role in protein sorting in the late-Golgi/trans-Golgi network (TGN) and/or endosomes. The AP complexes mediate both the recruitment of clathrin to membranes and the recognition of sorting signals within the cytosolic tails of transmembrane cargo molecules. AP-3 appears to be involved in the sorting of a subset of transmembrane proteins targeted to lysosomes and lysosome-related organelles. In concert with the BLOC-1 complex, AP-3 is required to target cargos into vesicles assembled at cell bodies for delivery into neurites and nerve terminals. The chain is AP-3 complex subunit beta-2 (Ap3b2) from Mus musculus (Mouse).